The primary structure comprises 181 residues: Large ribosomal subunit protein uL10 (181 aa).

The protein belongs to the universal ribosomal protein uL10 family. As to quaternary structure, part of the ribosomal stalk of the 50S ribosomal subunit. The N-terminus interacts with L11 and the large rRNA to form the base of the stalk. The C-terminus forms an elongated spine to which L12 dimers bind in a sequential fashion forming a multimeric L10(L12)X complex.

Functionally, forms part of the ribosomal stalk, playing a central role in the interaction of the ribosome with GTP-bound translation factors. This Fervidobacterium nodosum (strain ATCC 35602 / DSM 5306 / Rt17-B1) protein is Large ribosomal subunit protein uL10.